The primary structure comprises 492 residues: Probable glycine dehydrogenase (decarboxylating) subunit 2 (492 aa).

Lysine 274 carries the N6-(pyridoxal phosphate)lysine modification.

This sequence belongs to the GcvP family. C-terminal subunit subfamily. The glycine cleavage system is composed of four proteins: P, T, L and H. In this organism, the P 'protein' is a heterodimer of two subunits. It depends on pyridoxal 5'-phosphate as a cofactor.

It carries out the reaction N(6)-[(R)-lipoyl]-L-lysyl-[glycine-cleavage complex H protein] + glycine + H(+) = N(6)-[(R)-S(8)-aminomethyldihydrolipoyl]-L-lysyl-[glycine-cleavage complex H protein] + CO2. Functionally, the glycine cleavage system catalyzes the degradation of glycine. The P protein binds the alpha-amino group of glycine through its pyridoxal phosphate cofactor; CO(2) is released and the remaining methylamine moiety is then transferred to the lipoamide cofactor of the H protein. In Staphylococcus haemolyticus (strain JCSC1435), this protein is Probable glycine dehydrogenase (decarboxylating) subunit 2.